The chain runs to 275 residues: Arylamine N-acetyltransferase (275 aa).

The Acyl-thioester intermediate role is filled by Cys70. Residues His110 and Asp127 contribute to the active site.

It belongs to the arylamine N-acetyltransferase family. As to quaternary structure, homodimer and homotetramer.

It catalyses the reaction an arylamine + acetyl-CoA = an N-acetylarylamine + CoA. Catalyzes the transfer of the acetyl group from acetyl coenzyme A to the free amino group of arylamines and hydrazines. Substrates include isoniazid, anisidine, and 4-aminoveratrole, and to a much lesser extent, p-aminobenzoic acid. In Mycolicibacterium smegmatis (Mycobacterium smegmatis), this protein is Arylamine N-acetyltransferase.